The following is a 588-amino-acid chain: Pescadillo homolog (588 aa).

One can recognise a BRCT domain in the interval 344–437; it reads PVSTLFSDFV…KLVPANLYLP (94 aa). Disordered regions lie at residues 446-533 and 559-588; these read SPWG…EAEE and KKEE…EGKK. Residues 460-493 are compositionally biased toward acidic residues; sequence DAEEEGEDDEDEDSEEGSGAEVEENVDEDEDDEE. 2 stretches are compositionally biased toward basic and acidic residues: residues 510-519 and 576-588; these read SDIKDTEVKS and KTKE…EGKK. Positions 512–588 form a coiled coil; that stretch reads IKDTEVKSKN…EKLTKLEGKK (77 aa).

It belongs to the pescadillo family. Component of the NOP7 complex, composed of ERB1, NOP7 and YTM1. The complex is held together by ERB1, which interacts with NOP7 via its N-terminal domain and with YTM1 via a high-affinity interaction between the seven-bladed beta-propeller domains of the 2 proteins. The NOP7 complex associates with the 66S pre-ribosome.

The protein localises to the nucleus. It is found in the nucleolus. It localises to the nucleoplasm. Its function is as follows. Component of the NOP7 complex, which is required for maturation of the 25S and 5.8S ribosomal RNAs and formation of the 60S ribosome. In Vanderwaltozyma polyspora (strain ATCC 22028 / DSM 70294 / BCRC 21397 / CBS 2163 / NBRC 10782 / NRRL Y-8283 / UCD 57-17) (Kluyveromyces polysporus), this protein is Pescadillo homolog.